Consider the following 312-residue polypeptide: uncharacterized protein (312 aa).

It belongs to the asfivirus CP312R family.

It is found in the virion. This is an uncharacterized protein from African swine fever virus (isolate Tick/South Africa/Pretoriuskop Pr4/1996) (ASFV).